The following is a 2282-amino-acid chain: Ectopic P granules protein 5 homolog (2282 aa).

Belongs to the EPG5 family.

In terms of biological role, involved in autophagy. In Aedes aegypti (Yellowfever mosquito), this protein is Ectopic P granules protein 5 homolog.